A 397-amino-acid polypeptide reads, in one-letter code: Staphyloferrin A transporter (397 aa).

A run of 12 helical transmembrane segments spans residues 10 to 30 (FLLF…VLTT), 39 to 59 (IVNF…GAIA), 67 to 87 (LLRI…VLTY), 93 to 110 (PISV…LSAV), 137 to 157 (FIIN…LAVY), 162 to 182 (TFLA…PLHF), 213 to 233 (IFIT…LLPV), 245 to 265 (IFGI…LVLP), 271 to 292 (IGMV…LGVV), 296 to 313 (IVIM…SQWA), 333 to 353 (VLSI…LMSI), and 358 to 378 (FGIV…TMVF).

This sequence belongs to the major facilitator superfamily.

It localises to the cell membrane. Its function is as follows. Involved in staphyloferrin A secretion. This chain is Staphyloferrin A transporter, found in Staphylococcus aureus (strain NCTC 8325 / PS 47).